A 91-amino-acid chain; its full sequence is Small ribosomal subunit protein uS19 (91 aa).

It belongs to the universal ribosomal protein uS19 family.

In terms of biological role, protein S19 forms a complex with S13 that binds strongly to the 16S ribosomal RNA. The polypeptide is Small ribosomal subunit protein uS19 (Laribacter hongkongensis (strain HLHK9)).